Reading from the N-terminus, the 794-residue chain is Signal transducer and activator of transcription 5A (794 aa).

The residue at position 90 (Tyr90) is a Phosphotyrosine. 2 positions are modified to phosphoserine: Ser128 and Ser193. Positions 589 to 686 (WNDGAILGFV…EVFSKYYTPV (98 aa)) constitute an SH2 domain. Tyr682 is subject to Phosphotyrosine. Tyr694 is modified (phosphotyrosine; by JAK2). The tract at residues 773-794 (DSLDSRLSPPAGLFTSARGSLS) is disordered. At Ser780 the chain carries Phosphoserine.

This sequence belongs to the transcription factor STAT family. As to quaternary structure, forms a homodimer or a heterodimer with a related family member. Binds NR3C1. Interacts with NCOA1 and SOCS7. Interacts with ERBB4. Interacts with EBF4. Interacts with CD69. Post-translationally, tyrosine phosphorylated in response to KITLG/SCF, IL2, IL3, IL7, IL15, CSF2/GMCSF, GH1, PRL, EPO and THPO. Activated KIT promotes phosphorylation on tyrosine residues and subsequent translocation to the nucleus. Tyrosine phosphorylated in response to constitutively activated FGFR1, FGFR2, FGFR3 and FGFR4. Tyrosine phosphorylation is required for DNA-binding activity and dimerization. Serine phosphorylation is also required for maximal transcriptional activity. Tyrosine phosphorylated in response to signaling via activated FLT3; wild-type FLT3 results in much weaker phosphorylation than constitutively activated mutant FLT3. Alternatively, can be phosphorylated by JAK2 at Tyr-694. In terms of processing, ISGylated.

The protein localises to the cytoplasm. The protein resides in the nucleus. Functionally, carries out a dual function: signal transduction and activation of transcription. Mediates cellular responses to the cytokine KITLG/SCF and other growth factors. Mediates cellular responses to ERBB4. May mediate cellular responses to activated FGFR1, FGFR2, FGFR3 and FGFR4. Binds to the GAS element and activates PRL-induced transcription. Regulates the expression of milk proteins during lactation. The chain is Signal transducer and activator of transcription 5A (STAT5A) from Homo sapiens (Human).